Consider the following 600-residue polypeptide: Chaperone protein DnaK (600 aa).

Phosphothreonine; by autocatalysis is present on T175. Residues 569 to 578 (SFAQATAQQA) show a composition bias toward low complexity. A disordered region spans residues 569-600 (SFAQATAQQANTSESDPKADDSNTIDAEIKQD). Basic and acidic residues predominate over residues 583 to 600 (SDPKADDSNTIDAEIKQD).

Belongs to the heat shock protein 70 family.

In terms of biological role, acts as a chaperone. The protein is Chaperone protein DnaK of Mesomycoplasma hyopneumoniae (strain J / ATCC 25934 / NCTC 10110) (Mycoplasma hyopneumoniae).